The chain runs to 304 residues: Rhodopsin (304 aa).

At 1 to 13 the chain is on the extracellular side; that stretch reads YEYPQYYLVNPAA. A helical transmembrane segment spans residues 14-38; it reads YAALGAYMFLLILVGFPINFLTLYV. Residues 39–50 lie on the Cytoplasmic side of the membrane; sequence TIEHKKLRTPLN. A helical membrane pass occupies residues 51–73; that stretch reads YILLNLAVANLFMVFGGFTTTMF. Over 74 to 87 the chain is Extracellular; the sequence is TSIRGYFVLGHLGC. The cysteines at positions 87 and 164 are disulfide-linked. Residues 88–110 traverse the membrane as a helical segment; that stretch reads NLEGFFATLSGEIALWSLVVLAI. The short motif at 111–113 is the 'Ionic lock' involved in activated form stabilization element; the sequence is ERW. Topologically, residues 111-129 are cytoplasmic; sequence ERWVVVCKPISNFRFGENH. The helical transmembrane segment at 130 to 150 threads the bilayer; that stretch reads AIMGLAFTWTMAMACAAPPLV. Residues 151-179 lie on the Extracellular side of the membrane; the sequence is GWSRYIPEGMQCSCGIDYYTRAEGFNNES. A glycan (N-linked (GlcNAc...) asparagine) is linked at Asn-177. A helical membrane pass occupies residues 180–201; the sequence is FVVYMFTCHFMTPLTIVFFCYG. The Cytoplasmic portion of the chain corresponds to 202 to 229; it reads RLLCAVKEAAAAQQESETTQRAEREVTR. Residues 230–251 traverse the membrane as a helical segment; it reads MVVIMVIAFLICWCPYAGVAWF. The Extracellular portion of the chain corresponds to 252 to 263; that stretch reads IFTHQGSEFGPV. A helical membrane pass occupies residues 264 to 285; sequence FMTIPAFFAKSSSIYNPMIYIC. Lys-273 carries the post-translational modification N6-(retinylidene)lysine. Topologically, residues 286–304 are cytoplasmic; sequence LNKQFRHCMITTLCCGKKA. Residues Cys-299 and Cys-300 are each lipidated (S-palmitoyl cysteine).

This sequence belongs to the G-protein coupled receptor 1 family. Opsin subfamily. Post-translationally, phosphorylated on some or all of the serine and threonine residues present in the C-terminal region. In terms of processing, contains one covalently linked retinal chromophore.

It localises to the membrane. It is found in the cell projection. Its subcellular location is the cilium. The protein resides in the photoreceptor outer segment. Photoreceptor required for image-forming vision at low light intensity. While most salt water fish species use retinal as chromophore, most freshwater fish use 3-dehydroretinal, or a mixture of retinal and 3-dehydroretinal. Light-induced isomerization of 11-cis to all-trans retinal triggers a conformational change that activates signaling via G-proteins. Subsequent receptor phosphorylation mediates displacement of the bound G-protein alpha subunit by arrestin and terminates signaling. The protein is Rhodopsin (rho) of Ictalurus punctatus (Channel catfish).